A 128-amino-acid polypeptide reads, in one-letter code: 3-aminoacrylate deaminase RutC (128 aa).

This sequence belongs to the RutC family.

It carries out the reaction (Z)-3-aminoacrylate + H2O + H(+) = 3-oxopropanoate + NH4(+). Functionally, involved in pyrimidine catabolism. Catalyzes the deamination of 3-aminoacrylate to malonic semialdehyde, a reaction that can also occur spontaneously. RutC may facilitate the reaction and modulate the metabolic fitness, rather than catalyzing essential functions. This chain is 3-aminoacrylate deaminase RutC, found in Agrobacterium fabrum (strain C58 / ATCC 33970) (Agrobacterium tumefaciens (strain C58)).